We begin with the raw amino-acid sequence, 1477 residues long: FHA domain-containing protein PS1 (1477 aa).

One can recognise an FHA domain in the interval 64–115 (LVVGRHPDCDILLTHPSISRFHLEIRSISSRQKLFVTDLSSVHGTWVRDLRI). Disordered stretches follow at residues 188-218 (ENTTSGDEGVLHLDVTSEGTGSSVPSEDEDT), 588-644 (LGKA…PKSF), 789-818 (PNSFSKAEPTLETEDSRQQARGLVGSDSEF), 832-911 (LNQK…LIGS), 942-979 (ALAAKTSEDTKLIEELSSSDSGSQENQTPETHAVRDDV), 1004-1030 (IRTNKSQGKQKQTGRQPKDKLHRKQAL), and 1159-1225 (VEQE…IRSS). Basic and acidic residues predominate over residues 589 to 607 (GKADIRSHEENGESEDSRQ). Polar residues predominate over residues 832–849 (LNQKRNGETKVSSRQASP). Positions 870 to 883 (QSLCSSSQPPSESE) are enriched in low complexity. 4 stretches are compositionally biased toward polar residues: residues 885–897 (NPATDQDQESGII), 957–971 (LSSSDSGSQENQTPE), 1007–1018 (NKSQGKQKQTGR), and 1198–1212 (SSFQSQSYTEASSTA). The span at 1213-1225 (SARNNISRGIRSS) shows a compositional bias: low complexity.

Its function is as follows. Required for normal spindle orientation at male meiosis II and normal formation of tetrad of microspores. Not involved in female meiosis. The polypeptide is FHA domain-containing protein PS1 (Arabidopsis thaliana (Mouse-ear cress)).